Reading from the N-terminus, the 93-residue chain is Small ribosomal subunit protein uS15 (93 aa).

The protein belongs to the universal ribosomal protein uS15 family. In terms of assembly, part of the 30S ribosomal subunit. Forms a bridge to the 50S subunit in the 70S ribosome, contacting the 23S rRNA.

In terms of biological role, one of the primary rRNA binding proteins, it binds directly to 16S rRNA where it helps nucleate assembly of the platform of the 30S subunit by binding and bridging several RNA helices of the 16S rRNA. Functionally, forms an intersubunit bridge (bridge B4) with the 23S rRNA of the 50S subunit in the ribosome. This Anaplasma marginale (strain St. Maries) protein is Small ribosomal subunit protein uS15.